Reading from the N-terminus, the 549-residue chain is Hydroxylamine reductase (549 aa).

4 residues coordinate [2Fe-2S] cluster: C3, C6, C18, and C25. Hybrid [4Fe-2O-2S] cluster is bound by residues H248, E272, C316, C404, C432, C457, E491, and K493. Position 404 is a cysteine persulfide (C404).

It belongs to the HCP family. It depends on [2Fe-2S] cluster as a cofactor. Requires hybrid [4Fe-2O-2S] cluster as cofactor.

It localises to the cytoplasm. It carries out the reaction A + NH4(+) + H2O = hydroxylamine + AH2 + H(+). Functionally, catalyzes the reduction of hydroxylamine to form NH(3) and H(2)O. This is Hydroxylamine reductase from Aeromonas hydrophila subsp. hydrophila (strain ATCC 7966 / DSM 30187 / BCRC 13018 / CCUG 14551 / JCM 1027 / KCTC 2358 / NCIMB 9240 / NCTC 8049).